We begin with the raw amino-acid sequence, 131 residues long: Transcription antitermination protein NusB (131 aa).

Belongs to the NusB family.

Its function is as follows. Involved in transcription antitermination. Required for transcription of ribosomal RNA (rRNA) genes. Binds specifically to the boxA antiterminator sequence of the ribosomal RNA (rrn) operons. The sequence is that of Transcription antitermination protein NusB from Campylobacter curvus (strain 525.92).